A 150-amino-acid chain; its full sequence is UPF0336 protein SAV_4901 (150 aa).

Residues 8–126 (VGRSYPPTDP…GNDVVDVRGE (119 aa)) form the MaoC-like domain.

It belongs to the UPF0336 family.

This chain is UPF0336 protein SAV_4901, found in Streptomyces avermitilis (strain ATCC 31267 / DSM 46492 / JCM 5070 / NBRC 14893 / NCIMB 12804 / NRRL 8165 / MA-4680).